Here is a 360-residue protein sequence, read N- to C-terminus: Protein Wnt-2 (360 aa).

Positions 1–25 (MNVPLGGIWLWLPLLLTWLTPEVSS) are cleaved as a signal peptide. Cystine bridges form between Cys-76–Cys-87, Cys-127–Cys-135, Cys-137–Cys-157, Cys-206–Cys-220, Cys-208–Cys-215, Cys-278–Cys-309, Cys-294–Cys-304, Cys-308–Cys-348, Cys-324–Cys-339, Cys-326–Cys-336, and Cys-331–Cys-332. Residue Ser-212 is the site of O-palmitoleoyl serine; by PORCN attachment. The N-linked (GlcNAc...) asparagine glycan is linked to Asn-295.

Belongs to the Wnt family. In terms of processing, palmitoleoylation is required for efficient binding to frizzled receptors. Depalmitoleoylation leads to Wnt signaling pathway inhibition. In terms of tissue distribution, in embryos in the developing allantois, pericardium heart, and ventral-lateral mesoderm; in adults in lung, brain, heart and placenta.

The protein resides in the secreted. It is found in the extracellular space. The protein localises to the extracellular matrix. Its function is as follows. Ligand for members of the frizzled family of seven transmembrane receptors. Functions in the canonical Wnt/beta-catenin signaling pathway. Functions as a upstream regulator of FGF10 expression. Plays an important role in embryonic lung development. May contribute to embryonic brain development by regulating the proliferation of dopaminergic precursors and neurons. The sequence is that of Protein Wnt-2 (Wnt2) from Mus musculus (Mouse).